Consider the following 201-residue polypeptide: Histidine biosynthesis bifunctional protein HisIE (201 aa).

Positions 1 to 111 (MKINWQKVDN…EKTTQPDWIF (111 aa)) are phosphoribosyl-AMP cyclohydrolase. The interval 112–201 (LSKLERLIAS…IHKLKERHTK (90 aa)) is phosphoribosyl-ATP pyrophosphohydrolase.

This sequence in the N-terminal section; belongs to the PRA-CH family. It in the C-terminal section; belongs to the PRA-PH family.

The protein localises to the cytoplasm. It catalyses the reaction 1-(5-phospho-beta-D-ribosyl)-ATP + H2O = 1-(5-phospho-beta-D-ribosyl)-5'-AMP + diphosphate + H(+). The catalysed reaction is 1-(5-phospho-beta-D-ribosyl)-5'-AMP + H2O = 1-(5-phospho-beta-D-ribosyl)-5-[(5-phospho-beta-D-ribosylamino)methylideneamino]imidazole-4-carboxamide. The protein operates within amino-acid biosynthesis; L-histidine biosynthesis; L-histidine from 5-phospho-alpha-D-ribose 1-diphosphate: step 2/9. It functions in the pathway amino-acid biosynthesis; L-histidine biosynthesis; L-histidine from 5-phospho-alpha-D-ribose 1-diphosphate: step 3/9. The polypeptide is Histidine biosynthesis bifunctional protein HisIE (hisI) (Pasteurella multocida (strain Pm70)).